A 367-amino-acid polypeptide reads, in one-letter code: 7,8-didemethyl-8-hydroxy-5-deazariboflavin synthase (367 aa).

Residues 39-275 form the Radical SAM core domain; the sequence is LTFARNVFVP…AEVGVQVPPN (237 aa). Residues Cys-53, Cys-57, and Cys-60 each contribute to the [4Fe-4S] cluster site.

This sequence belongs to the radical SAM superfamily. CofG family. Consists of two subunits, CofG and CofH. [4Fe-4S] cluster serves as cofactor.

It catalyses the reaction 5-amino-5-(4-hydroxybenzyl)-6-(D-ribitylimino)-5,6-dihydrouracil + S-adenosyl-L-methionine = 7,8-didemethyl-8-hydroxy-5-deazariboflavin + 5'-deoxyadenosine + L-methionine + NH4(+) + H(+). It participates in cofactor biosynthesis; coenzyme F0 biosynthesis. Catalyzes the radical-mediated synthesis of 7,8-didemethyl-8-hydroxy-5-deazariboflavin from 5-amino-5-(4-hydroxybenzyl)-6-(D-ribitylimino)-5,6-dihydrouracil. The sequence is that of 7,8-didemethyl-8-hydroxy-5-deazariboflavin synthase from Halobacterium salinarum (strain ATCC 29341 / DSM 671 / R1).